A 437-amino-acid chain; its full sequence is Bile acid CoA-transferase BaiK (437 aa).

Aspartate 171 functions as the Nucleophile in the catalytic mechanism.

Belongs to the CoA-transferase III family.

The catalysed reaction is deoxycholoyl-CoA + cholate = choloyl-CoA + deoxycholate. The enzyme catalyses allodeoxycholoyl-CoA + cholate = allodeoxycholate + choloyl-CoA. It carries out the reaction allocholate + deoxycholoyl-CoA = allocholoyl-CoA + deoxycholate. It catalyses the reaction allocholate + allodeoxycholoyl-CoA = allocholoyl-CoA + allodeoxycholate. The catalysed reaction is ursodeoxycholate + deoxycholoyl-CoA = ursodeoxycholoyl-CoA + deoxycholate. The enzyme catalyses allodeoxycholoyl-CoA + ursodeoxycholate = ursodeoxycholoyl-CoA + allodeoxycholate. Its pathway is lipid metabolism; bile acid biosynthesis. Its function is as follows. Functions in the bile acid 7alpha-dehydroxylation pathway, which forms secondary bile acids via the 7alpha-dehydroxylation of primary bile acids, and is carried out by intestinal anaerobic bacteria. Acts as a bile acid CoA transferase with broad bile acid substrate specificity. Catalyzes the transfer of the CoA moiety of secondary bile acid-CoA compounds to primary bile acids. Can use deoxycholoyl-CoA and allodeoxycholoyl-CoA as bile acid CoA donors and cholate, allocholate and ursodeoxycholate as bile acid CoA acceptors. Shows no activity when lithocholoyl-CoA is used as the CoA donor. This Clostridium scindens (strain JCM 10418 / VPI 12708) protein is Bile acid CoA-transferase BaiK.